Consider the following 208-residue polypeptide: ATP-dependent Clp protease proteolytic subunit (208 aa).

Ser-107 acts as the Nucleophile in catalysis. The active site involves His-132.

This sequence belongs to the peptidase S14 family. As to quaternary structure, fourteen ClpP subunits assemble into 2 heptameric rings which stack back to back to give a disk-like structure with a central cavity, resembling the structure of eukaryotic proteasomes.

The protein localises to the cytoplasm. The enzyme catalyses Hydrolysis of proteins to small peptides in the presence of ATP and magnesium. alpha-casein is the usual test substrate. In the absence of ATP, only oligopeptides shorter than five residues are hydrolyzed (such as succinyl-Leu-Tyr-|-NHMec, and Leu-Tyr-Leu-|-Tyr-Trp, in which cleavage of the -Tyr-|-Leu- and -Tyr-|-Trp bonds also occurs).. Functionally, cleaves peptides in various proteins in a process that requires ATP hydrolysis. Has a chymotrypsin-like activity. Plays a major role in the degradation of misfolded proteins. This is ATP-dependent Clp protease proteolytic subunit from Methylorubrum extorquens (strain CM4 / NCIMB 13688) (Methylobacterium extorquens).